Consider the following 178-residue polypeptide: UPF0215 protein STK_03040 (178 aa).

The protein belongs to the UPF0215 family.

The sequence is that of UPF0215 protein STK_03040 from Sulfurisphaera tokodaii (strain DSM 16993 / JCM 10545 / NBRC 100140 / 7) (Sulfolobus tokodaii).